The chain runs to 363 residues: UDP-3-O-acylglucosamine N-acyltransferase (363 aa).

H266 (proton acceptor) is an active-site residue.

Belongs to the transferase hexapeptide repeat family. LpxD subfamily. Homotrimer.

The enzyme catalyses a UDP-3-O-[(3R)-3-hydroxyacyl]-alpha-D-glucosamine + a (3R)-hydroxyacyl-[ACP] = a UDP-2-N,3-O-bis[(3R)-3-hydroxyacyl]-alpha-D-glucosamine + holo-[ACP] + H(+). It functions in the pathway bacterial outer membrane biogenesis; LPS lipid A biosynthesis. In terms of biological role, catalyzes the N-acylation of UDP-3-O-acylglucosamine using 3-hydroxyacyl-ACP as the acyl donor. Is involved in the biosynthesis of lipid A, a phosphorylated glycolipid that anchors the lipopolysaccharide to the outer membrane of the cell. This is UDP-3-O-acylglucosamine N-acyltransferase from Bordetella parapertussis (strain 12822 / ATCC BAA-587 / NCTC 13253).